Here is a 104-residue protein sequence, read N- to C-terminus: Large ribosomal subunit protein eL30 (104 aa).

Belongs to the eukaryotic ribosomal protein eL30 family.

The protein is Large ribosomal subunit protein eL30 (rpl30e) of Sulfolobus acidocaldarius (strain ATCC 33909 / DSM 639 / JCM 8929 / NBRC 15157 / NCIMB 11770).